The primary structure comprises 308 residues: MERLQRIFGAGGGLGHASPDSPTLDTSEQVYISSLALLKMLKHGRAGVPMEVMGLMLGEFVDEYTVRVVDVFAMPQSGTGVSVEAVDHVFQTNMLDMLKQTGRPEMVVGWYHSHPGFGCWLSGVDINTQQSFEALNQRAVAVVVDPIQSVKGKVVIDAFRSINPQTIMLGQEPRQTTSNLGHLNKPSIQALIHGLNRHYYSIAINYRKNELEEKMLLNLHKKKWTDGLTLRRFDTHSKTNEQTVQEMLSLAAKYNKAVQEEDELSPEKLAIVNVGRQDAKKHLEEHVSNLMSSNIVQTLGTMLDTVVF.

The MPN domain occupies 30 to 165; sequence VYISSLALLK…IDAFRSINPQ (136 aa). 3 residues coordinate Zn(2+): histidine 112, histidine 114, and aspartate 125. The short motif at 112–125 is the JAMM motif element; sequence HSHPGFGCWLSGVD. Lysine 238 is covalently cross-linked (Glycyl lysine isopeptide (Lys-Gly) (interchain with G-Cter in ubiquitin)).

Belongs to the peptidase M67A family. PSMD14 subfamily. As to quaternary structure, component of the 19S regulatory particle (RP/PA700) lid subcomplex of the 26S proteasome. The 26S proteasome is composed of a core protease (CP), known as the 20S proteasome, capped at one or both ends by the 19S regulatory particle (RP/PA700). The RP/PA700 complex is composed of at least 17 different subunits in two subcomplexes, the base and the lid, which form the portions proximal and distal to the 20S proteolytic core, respectively. Ubiquitous with highest expression in flowers.

Metalloprotease component of the 26S proteasome that specifically cleaves 'Lys-63'-linked polyubiquitin chains. The 26S proteasome is involved in the ATP-dependent degradation of ubiquitinated proteins. The function of the 'Lys-63'-specific deubiquitination of the proteasome is unclear. The protein is 26S proteasome non-ATPase regulatory subunit 14 homolog (RPN11) of Arabidopsis thaliana (Mouse-ear cress).